The sequence spans 446 residues: tRNA modification GTPase MnmE (446 aa).

(6S)-5-formyl-5,6,7,8-tetrahydrofolate contacts are provided by R23, E81, and K120. In terms of domain architecture, TrmE-type G spans 216–370 (GFKVAIIGKP…LIKELELILD (155 aa)). K(+) is bound at residue N226. Residues 226–231 (NVGKSS), 245–251 (SDIAGTT), and 270–273 (DTAG) each bind GTP. A Mg(2+)-binding site is contributed by S230. S245, I247, and T250 together coordinate K(+). A Mg(2+)-binding site is contributed by T251. Position 446 (K446) interacts with (6S)-5-formyl-5,6,7,8-tetrahydrofolate.

It belongs to the TRAFAC class TrmE-Era-EngA-EngB-Septin-like GTPase superfamily. TrmE GTPase family. As to quaternary structure, homodimer. Heterotetramer of two MnmE and two MnmG subunits. The cofactor is K(+).

The protein localises to the cytoplasm. Exhibits a very high intrinsic GTPase hydrolysis rate. Involved in the addition of a carboxymethylaminomethyl (cmnm) group at the wobble position (U34) of certain tRNAs, forming tRNA-cmnm(5)s(2)U34. This is tRNA modification GTPase MnmE from Aliarcobacter butzleri (strain RM4018) (Arcobacter butzleri).